The chain runs to 34 residues: Egg-releasing peptide (34 aa).

This Aplysia californica (California sea hare) protein is Egg-releasing peptide.